The following is a 92-amino-acid chain: Bombyxin A-5 (92 aa).

The N-terminal stretch at 1-19 is a signal peptide; that stretch reads MKLLLAIALMLTTVMWAST. At glutamine 20 the chain carries Pyrrolidone carboxylic acid. 3 disulfide bridges follow: cysteine 29–cysteine 79, cysteine 41–cysteine 92, and cysteine 78–cysteine 83. Positions 50–71 are cleaved as a propeptide — c peptide like; it reads SDAQFASYGSAWLMPYSEGRDQ.

The protein belongs to the insulin family. In terms of assembly, heterodimer of a B chain and an A chain linked by two disulfide bonds.

It localises to the secreted. Brain peptide responsible for activation of prothoracic glands to produce ecdysone in insects. The protein is Bombyxin A-5 (BBXA5) of Bombyx mori (Silk moth).